The primary structure comprises 481 residues: Autolysin (481 aa).

One can recognise a Peptidase C51 domain in the interval 7–142 (KNEFIERLKT…LQDDNMLMIS (136 aa)). Residues 198 to 323 (SNPKGIVIHN…NEFTSTSCPH (126 aa)) form the N-acetylmuramoyl-L-alanine amidase domain. The SH3b domain maps to 398 to 466 (EESARFTNGN…YLPIRTWNGS (69 aa)).

Belongs to the N-acetylmuramoyl-L-alanine amidase 2 family.

Its subcellular location is the secreted. It catalyses the reaction Hydrolyzes the link between N-acetylmuramoyl residues and L-amino acid residues in certain cell-wall glycopeptides.. Functionally, autolysins are involved in some important biological processes such as cell separation, cell-wall turnover, competence for genetic transformation, formation of the flagella and sporulation. Autolysin strictly depends on the presence of choline-containing cell walls for activity. This Staphylococcus aureus protein is Autolysin (lytA).